The following is a 181-amino-acid chain: Caltractin ICL1a (181 aa).

A disordered region spans residues 1–29 (MARRGQQPPPQQAPPAQKNQPGKFNPAEF). Low complexity predominate over residues 14-23 (PPAQKNQPGK). EF-hand domains are found at residues 37-72 (EEVLEIKEAFDLFDTDGTQSIDPKELKAAMTSLGFE), 73-108 (AKNQTIYQMISDLDTDGSGQIDFAEFLKLMTARISE), 110-145 (DSKADIQKVFNLFDSERAGVVTLKDLRKVAKELGET), and 146-181 (MDDSELQEMIDRADSDGDAQVTFEDFYNIMTKKTFA). Asp50, Asp52, Thr54, Ser56, Glu61, Asp86, Asp88, Ser90, Gln92, and Glu97 together coordinate Ca(2+).

This sequence belongs to the centrin family. In terms of assembly, monomer.

It localises to the cytoplasm. The protein resides in the cytoskeleton. Plays a fundamental role in microtubule organizing center structure and function. Component of the infraciliary lattice (ICL) and the ciliary basal bodies. This Paramecium tetraurelia protein is Caltractin ICL1a (Icl1a).